Reading from the N-terminus, the 284-residue chain is GPN-loop GTPase 3 (284 aa).

Residue 13-18 (GSGKST) participates in GTP binding. Residues 72–74 (GPN) carry the Gly-Pro-Asn (GPN)-loop; involved in dimer interface motif. 174–177 (TKMD) serves as a coordination point for GTP. Residues 261-284 (KEPKEHEDESSSMFDEYFQEHQNE) form a disordered region.

Belongs to the GPN-loop GTPase family. As to quaternary structure, heterodimer with GPN1. Binds to RNA polymerase II (RNAPII). Interacts directly with subunits RPB4 and RPB7 and the CTD of RPB1.

Its function is as follows. Small GTPase required for proper localization of RNA polymerase II (RNAPII). May act at an RNAP assembly step prior to nuclear import. In Bos taurus (Bovine), this protein is GPN-loop GTPase 3.